Consider the following 433-residue polypeptide: Zinc finger protein CONSTANS-LIKE 15 (433 aa).

The Zn(2+) site is built by Cys9, Cys12, Cys32, His37, Cys52, Cys55, Cys75, and His80. The B box-type 1; atypical zinc-finger motif lies at 9–51 (CDFCGERTAVLFCRADTAKLCLPCDQQVHTANLLSRKHVRSQI). The segment at 52-94 (CDNCGNEPVSVRCFTDNLILCQECDWDVHGSCSVSDAHVRSAV) adopts a B box-type 2; atypical zinc-finger fold. The segment at 319–353 (DDYKRSTSGQVQPTKSESNNRPITFGSEKGSNSSS) is disordered. The span at 324–340 (STSGQVQPTKSESNNRP) shows a compositional bias: polar residues. Residues 374–398 (TKADLERLAQNRGDAMQRYKEKRKT) are a coiled coil. One can recognise a CCT domain in the interval 385–427 (RGDAMQRYKEKRKTRRYDKTIRYESRKARADTRLRVRGRFVKA).

The protein belongs to the CONSTANS family.

Its subcellular location is the nucleus. This chain is Zinc finger protein CONSTANS-LIKE 15 (COL15), found in Arabidopsis thaliana (Mouse-ear cress).